The following is a 122-amino-acid chain: MIQMQSYLDVADNSGAKQVMCFKVLGGSKRRYAGIGDIIKVTVKDAIPRGKVKKGEVYDAVVVRTRKGVRRADGSLIRFDGNAAVLLNSKQEPIGTRIFGPVTRELRSEKFMKIVSLAPEVL.

Belongs to the universal ribosomal protein uL14 family. As to quaternary structure, part of the 50S ribosomal subunit. Forms a cluster with proteins L3 and L19. In the 70S ribosome, L14 and L19 interact and together make contacts with the 16S rRNA in bridges B5 and B8.

In terms of biological role, binds to 23S rRNA. Forms part of two intersubunit bridges in the 70S ribosome. The sequence is that of Large ribosomal subunit protein uL14 from Stenotrophomonas maltophilia (strain R551-3).